A 226-amino-acid chain; its full sequence is Glutathione peroxidase 3 (226 aa).

The N-terminal stretch at 1 to 24 is a signal peptide; it reads MARLLQASCLLSLLLAGFVPQSRG. U73 is a catalytic residue. U73 is a non-standard amino acid (selenocysteine).

It belongs to the glutathione peroxidase family. Homotetramer. In terms of tissue distribution, secreted in plasma.

The protein resides in the secreted. The enzyme catalyses 2 glutathione + H2O2 = glutathione disulfide + 2 H2O. It catalyses the reaction tert-butyl hydroperoxide + 2 glutathione = tert-butanol + glutathione disulfide + H2O. In terms of biological role, protects cells and enzymes from oxidative damage, by catalyzing the reduction of hydrogen peroxide, lipid peroxides and organic hydroperoxide, by glutathione. This Hylobates lar (Lar gibbon) protein is Glutathione peroxidase 3.